Consider the following 326-residue polypeptide: GTP 3',8-cyclase (326 aa).

Positions 7–232 (GFGRSFPYLR…PRAADAGPAR (226 aa)) constitute a Radical SAM core domain. GTP is bound at residue arginine 16. Residues cysteine 23 and cysteine 27 each coordinate [4Fe-4S] cluster. Tyrosine 29 serves as a coordination point for S-adenosyl-L-methionine. Position 30 (cysteine 30) interacts with [4Fe-4S] cluster. A GTP-binding site is contributed by arginine 65. Glycine 69 is a binding site for S-adenosyl-L-methionine. A GTP-binding site is contributed by threonine 96. Position 120 (serine 120) interacts with S-adenosyl-L-methionine. A GTP-binding site is contributed by lysine 157. S-adenosyl-L-methionine is bound at residue methionine 191. [4Fe-4S] cluster is bound by residues cysteine 254 and cysteine 257. 259–261 (RLR) lines the GTP pocket. Cysteine 271 is a [4Fe-4S] cluster binding site.

This sequence belongs to the radical SAM superfamily. MoaA family. In terms of assembly, monomer and homodimer. The cofactor is [4Fe-4S] cluster.

The enzyme catalyses GTP + AH2 + S-adenosyl-L-methionine = (8S)-3',8-cyclo-7,8-dihydroguanosine 5'-triphosphate + 5'-deoxyadenosine + L-methionine + A + H(+). The protein operates within cofactor biosynthesis; molybdopterin biosynthesis. Its function is as follows. Catalyzes the cyclization of GTP to (8S)-3',8-cyclo-7,8-dihydroguanosine 5'-triphosphate. The protein is GTP 3',8-cyclase of Stenotrophomonas maltophilia (strain R551-3).